Here is a 190-residue protein sequence, read N- to C-terminus: Probable chemoreceptor glutamine deamidase CheD (190 aa).

It belongs to the CheD family.

The catalysed reaction is L-glutaminyl-[protein] + H2O = L-glutamyl-[protein] + NH4(+). Probably deamidates glutamine residues to glutamate on methyl-accepting chemotaxis receptors (MCPs), playing an important role in chemotaxis. The polypeptide is Probable chemoreceptor glutamine deamidase CheD (Acidiphilium cryptum (strain JF-5)).